The primary structure comprises 457 residues: Peptidyl-prolyl cis-trans isomerase FKBP5 (457 aa).

N-acetylmethionine is present on Met-1. The segment at 1 to 26 (MTTDEGAKNSRGNPAATVAEQGEDVT) is disordered. N6-acetyllysine is present on Lys-28. PPIase FKBP-type domains lie at 50-138 (GDRV…LDFK) and 165-251 (GARV…KSFE). 3 TPR repeats span residues 268 to 301 (AAIVKEKGTVYFKGGKYVQAVIQYGKIVSWLEME), 317 to 350 (LAAFLNLAMCYLKLREYTKAVECCDKALGLDSAN), and 351 to 384 (EKGLYRRGEAQLLMNEFESAKGDFEKVLEVNPQN). The disordered stretch occupies residues 421–457 (AKEEANKAMSKKTSEGVTNEKLTASHAVEEEKPEGHV). At Ser-445 the chain carries Phosphoserine. Residues 447 to 457 (AVEEEKPEGHV) show a composition bias toward basic and acidic residues.

Part of a heteromultimeric cytoplasmic complex with HSP90AA1, HSPA1A/HSPA1B and steroid receptors. Upon ligand binding dissociates from the complex and FKBP4 takes its place. Interacts with functionally mature heterooligomeric progesterone receptor complexes along with HSP90 and TEBP. Interacts with NR3C1. Interacts with Akt/AKT1 and PHLPP1; enhancing dephosphorylation and subsequent activation of Akt/AKT1. Interacts with IFI44L; this interaction modulates the kinase activity of IKBKB and IKBKE. Interacts with IKBKB and IKBKE. In terms of processing, acetylation impairs ability to promote interaction between Akt/AKT1 and PHLPP1. Deacetylation by SIRT7 promotes interaction between Akt/AKT1 and PHLPP1, leading to suppress Akt/AKT1 activation. Ubiquitinated, leading to degradation in a proteasome-dependent manner. Deubiquitinated by USP49, leading to stabilization.

The protein resides in the cytoplasm. It is found in the nucleus. It catalyses the reaction [protein]-peptidylproline (omega=180) = [protein]-peptidylproline (omega=0). With respect to regulation, inhibited by both FK506 and rapamycin. In terms of biological role, immunophilin protein with PPIase and co-chaperone activities. Component of unligated steroid receptors heterocomplexes through interaction with heat-shock protein 90 (HSP90). Plays a role in the intracellular trafficking of heterooligomeric forms of steroid hormone receptors maintaining the complex into the cytoplasm when unliganded. Acts as a regulator of Akt/AKT1 activity by promoting the interaction between Akt/AKT1 and PHLPP1, thereby enhancing dephosphorylation and subsequent activation of Akt/AKT1. Interacts with IKBKE and IKBKB which facilitates IKK complex assembly leading to increased IKBKE and IKBKB kinase activity, NF-kappaB activation, and IFN production. The sequence is that of Peptidyl-prolyl cis-trans isomerase FKBP5 (FKBP5) from Saimiri boliviensis boliviensis (Bolivian squirrel monkey).